Here is a 404-residue protein sequence, read N- to C-terminus: N-acetylglucosamine-6-phosphate deacetylase (404 aa).

Residue glutamate 143 participates in a divalent metal cation binding. Residue 154–155 (AH) participates in substrate binding. Residues histidine 211 and histidine 232 each coordinate a divalent metal cation. Substrate-binding positions include 235 to 236 (NA), arginine 243, and 269 to 272 (DGIH). Catalysis depends on aspartate 294, which acts as the Proton donor/acceptor. Residue 328-330 (LSG) coordinates substrate.

The protein belongs to the metallo-dependent hydrolases superfamily. NagA family. A divalent metal cation is required as a cofactor.

It carries out the reaction N-acetyl-D-glucosamine 6-phosphate + H2O = D-glucosamine 6-phosphate + acetate. The protein operates within amino-sugar metabolism; N-acetylneuraminate degradation. Its function is as follows. Hydrolyzes the N-glycolyl group from N-glycolylglucosamine 6-phosphate (GlcNGc-6-P) in the N-glycolylneuraminic acid (Neu5Gc) degradation pathway. In Danio rerio (Zebrafish), this protein is N-acetylglucosamine-6-phosphate deacetylase (amdhd2).